The chain runs to 91 residues: Cell division protein CrgA (91 aa).

Positions 1-24 (MPKSKITTEGSALPQSSSSATNRT) are enriched in polar residues. The tract at residues 1-28 (MPKSKITTEGSALPQSSSSATNRTPVKI) is disordered. Helical transmembrane passes span 38–58 (IAIM…NYLA) and 68–88 (LGPW…LMTM).

Belongs to the CrgA family.

The protein localises to the cell membrane. Its function is as follows. Involved in cell division. This is Cell division protein CrgA from Corynebacterium aurimucosum (strain ATCC 700975 / DSM 44827 / CIP 107346 / CN-1) (Corynebacterium nigricans).